A 211-amino-acid chain; its full sequence is Thymidylate kinase (211 aa).

Glycine 7–serine 14 is a binding site for ATP.

The protein belongs to the thymidylate kinase family.

It carries out the reaction dTMP + ATP = dTDP + ADP. Phosphorylation of dTMP to form dTDP in both de novo and salvage pathways of dTTP synthesis. The chain is Thymidylate kinase from Chlamydia abortus (strain DSM 27085 / S26/3) (Chlamydophila abortus).